The chain runs to 139 residues: Small ribosomal subunit protein uS12 (139 aa).

Aspartate 102 carries the 3-methylthioaspartic acid modification. Positions 116–139 are disordered; the sequence is DTTGVAKRSQGRSKYGAKRPKKSK. The segment covering 124–139 has biased composition (basic residues); the sequence is SQGRSKYGAKRPKKSK.

Belongs to the universal ribosomal protein uS12 family. As to quaternary structure, part of the 30S ribosomal subunit. Contacts proteins S8 and S17. May interact with IF1 in the 30S initiation complex.

Its function is as follows. With S4 and S5 plays an important role in translational accuracy. Functionally, interacts with and stabilizes bases of the 16S rRNA that are involved in tRNA selection in the A site and with the mRNA backbone. Located at the interface of the 30S and 50S subunits, it traverses the body of the 30S subunit contacting proteins on the other side and probably holding the rRNA structure together. The combined cluster of proteins S8, S12 and S17 appears to hold together the shoulder and platform of the 30S subunit. The protein is Small ribosomal subunit protein uS12 of Mesomycoplasma hyopneumoniae (strain 7448) (Mycoplasma hyopneumoniae).